Reading from the N-terminus, the 1373-residue chain is DNA-directed RNA polymerase subunit beta (1373 aa).

The protein belongs to the RNA polymerase beta chain family. As to quaternary structure, the RNAP catalytic core consists of 2 alpha, 1 beta, 1 beta' and 1 omega subunit. When a sigma factor is associated with the core the holoenzyme is formed, which can initiate transcription.

It catalyses the reaction RNA(n) + a ribonucleoside 5'-triphosphate = RNA(n+1) + diphosphate. Its function is as follows. DNA-dependent RNA polymerase catalyzes the transcription of DNA into RNA using the four ribonucleoside triphosphates as substrates. The sequence is that of DNA-directed RNA polymerase subunit beta from Rickettsia conorii (strain ATCC VR-613 / Malish 7).